The chain runs to 775 residues: Ankyrin repeat and EF-hand domain-containing protein 1 (775 aa).

ANK repeat units lie at residues 47–76, 184–213, 217–246, 250–279, 524–553, 557–586, 590–619, and 623–652; these read DGLSALHLASISNDTDMVSFLLKLGAHPDV, TGRTALMESSREGVLEIVRGILERGGEVNA, DRHHAAHFAAKGGFFDILKLLFAYNGDMGL, DGNTPLHFAAMGGFADCCKYIAQRGCDLKW, TYKTPLMIACASGNIDVVKFLIEKGANVNA, FLWTPLHFACHAGQQDIVELLVKAGASIDA, NNSTPLSRAIESCRLDTVKYLLDMGAKFQI, and KGHAAMDIAKAYADYRIIDMIKEKLDNLPK.

The chain is Ankyrin repeat and EF-hand domain-containing protein 1 (Ankef1) from Mus musculus (Mouse).